Consider the following 351-residue polypeptide: sn-glycerol-3-phosphate import ATP-binding protein UgpC (351 aa).

The region spanning 4–234 (ITLDNLVKAY…PATTFVAGFI (231 aa)) is the ABC transporter domain. 36–43 (GPSGCGKS) contacts ATP.

The protein belongs to the ABC transporter superfamily. sn-glycerol-3-phosphate importer (TC 3.A.1.1.3) family. As to quaternary structure, the complex is composed of two ATP-binding proteins (UgpC), two transmembrane proteins (UgpA and UgpE) and a solute-binding protein (UgpB).

The protein localises to the cell inner membrane. It catalyses the reaction sn-glycerol 3-phosphate(out) + ATP + H2O = sn-glycerol 3-phosphate(in) + ADP + phosphate + H(+). Part of the ABC transporter complex UgpBAEC involved in sn-glycerol-3-phosphate (G3P) import. Responsible for energy coupling to the transport system. The sequence is that of sn-glycerol-3-phosphate import ATP-binding protein UgpC from Ruegeria pomeroyi (strain ATCC 700808 / DSM 15171 / DSS-3) (Silicibacter pomeroyi).